Reading from the N-terminus, the 442-residue chain is Cytokine receptor-like factor 3 (442 aa).

Residues 10–46 are a coiled coil; sequence EVLLQEARENVEAAQSYRRELGQRLQGLREAQRQIKE. Positions 181–274 constitute a Fibronectin type-III domain; that stretch reads PPVQIEELIE…PQTGHSTLVP (94 aa).

Belongs to the cytokine receptor-like factor 3 family.

Its subcellular location is the cytoplasm. In terms of biological role, may play a role in the negative regulation of cell cycle progression. This is Cytokine receptor-like factor 3 (Crlf3) from Mus musculus (Mouse).